A 254-amino-acid chain; its full sequence is UPF0328 protein ECU01_0070/ECU01_1540/ECU02_1570/ECU04_0080/ECU08_2100 (254 aa).

This sequence belongs to the UPF0328 family.

This is UPF0328 protein ECU01_0070/ECU01_1540/ECU02_1570/ECU04_0080/ECU08_2100 from Encephalitozoon cuniculi (strain GB-M1) (Microsporidian parasite).